The following is a 435-amino-acid chain: Methylenetetrahydrofolate--tRNA-(uracil-5-)-methyltransferase TrmFO (435 aa).

FAD is bound at residue 10 to 15 (GAGLAG).

It belongs to the MnmG family. TrmFO subfamily. FAD serves as cofactor.

The protein resides in the cytoplasm. The enzyme catalyses uridine(54) in tRNA + (6R)-5,10-methylene-5,6,7,8-tetrahydrofolate + NADH + H(+) = 5-methyluridine(54) in tRNA + (6S)-5,6,7,8-tetrahydrofolate + NAD(+). The catalysed reaction is uridine(54) in tRNA + (6R)-5,10-methylene-5,6,7,8-tetrahydrofolate + NADPH + H(+) = 5-methyluridine(54) in tRNA + (6S)-5,6,7,8-tetrahydrofolate + NADP(+). Its function is as follows. Catalyzes the folate-dependent formation of 5-methyl-uridine at position 54 (M-5-U54) in all tRNAs. The polypeptide is Methylenetetrahydrofolate--tRNA-(uracil-5-)-methyltransferase TrmFO (Halalkalibacterium halodurans (strain ATCC BAA-125 / DSM 18197 / FERM 7344 / JCM 9153 / C-125) (Bacillus halodurans)).